A 223-amino-acid chain; its full sequence is MNRIIPPENLPELLERAHMMAGVSLAQIAAQRGLNVPKDLKRDKGWVGQLIEMELGATAGSKPEQDFLHLGVELKTIPIDSQGRPLETTYVCVAPLSNIQGLTWQNSLVCHKLQRVLWVPVEGERHIPVGERRIGTPILWEPDPQELQLLQQDWEEIMELIALGKVEKLTARHGEVLQLRPKAANSKALTQSIAEDGSLKMTNPRGFYLKTSFTAMILNKVFG.

The protein belongs to the MutH family.

The protein localises to the cytoplasm. Sequence-specific endonuclease that cleaves unmethylated GATC sequences. It is involved in DNA mismatch repair. The sequence is that of DNA mismatch repair protein MutH from Shewanella baltica (strain OS195).